An 819-amino-acid chain; its full sequence is Endonuclease MutS2 (819 aa).

339–346 contributes to the ATP binding site; sequence GPNTGGKT. One can recognise a Smr domain in the interval 744 to 819; it reads VDVRGLRVDE…GAGVTVAELA (76 aa).

It belongs to the DNA mismatch repair MutS family. MutS2 subfamily. In terms of assembly, homodimer. Binds to stalled ribosomes, contacting rRNA.

Functionally, endonuclease that is involved in the suppression of homologous recombination and thus may have a key role in the control of bacterial genetic diversity. In terms of biological role, acts as a ribosome collision sensor, splitting the ribosome into its 2 subunits. Detects stalled/collided 70S ribosomes which it binds and splits by an ATP-hydrolysis driven conformational change. Acts upstream of the ribosome quality control system (RQC), a ribosome-associated complex that mediates the extraction of incompletely synthesized nascent chains from stalled ribosomes and their subsequent degradation. Probably generates substrates for RQC. This chain is Endonuclease MutS2, found in Gemmatimonas aurantiaca (strain DSM 14586 / JCM 11422 / NBRC 100505 / T-27).